Consider the following 257-residue polypeptide: Imidazole glycerol phosphate synthase subunit HisF (257 aa).

Residues Asp-11 and Asp-130 contribute to the active site.

The protein belongs to the HisA/HisF family. As to quaternary structure, heterodimer of HisH and HisF.

The protein localises to the cytoplasm. The catalysed reaction is 5-[(5-phospho-1-deoxy-D-ribulos-1-ylimino)methylamino]-1-(5-phospho-beta-D-ribosyl)imidazole-4-carboxamide + L-glutamine = D-erythro-1-(imidazol-4-yl)glycerol 3-phosphate + 5-amino-1-(5-phospho-beta-D-ribosyl)imidazole-4-carboxamide + L-glutamate + H(+). Its pathway is amino-acid biosynthesis; L-histidine biosynthesis; L-histidine from 5-phospho-alpha-D-ribose 1-diphosphate: step 5/9. IGPS catalyzes the conversion of PRFAR and glutamine to IGP, AICAR and glutamate. The HisF subunit catalyzes the cyclization activity that produces IGP and AICAR from PRFAR using the ammonia provided by the HisH subunit. The chain is Imidazole glycerol phosphate synthase subunit HisF from Shewanella piezotolerans (strain WP3 / JCM 13877).